The primary structure comprises 982 residues: Protein phosphatase 1 regulatory subunit 12B (982 aa).

Basic and acidic residues predominate over residues 1–24 (MAELEHLGGKRAESARMRRAEQLR). A disordered region spans residues 1 to 50 (MAELEHLGGKRAESARMRRAEQLRRWRGSLTEQEPAERRGAGRQPLTRRG). Ser-29 carries the post-translational modification Phosphoserine. ANK repeat units lie at residues 57–86 (EDGA…DINT), 90–119 (DGLT…NVNQ), 123–152 (EGWT…SVGI), 216–245 (SGAT…ELNV), and 249–278 (DGWT…DMDI). Disordered regions lie at residues 342-517 (EETP…RESA), 556-579 (RTPH…SSTP), 606-864 (TDSS…EARE), and 918-948 (AQQK…KMSE). A compositionally biased stretch (acidic residues) spans 362–374 (SEEEEGEDEASES). Over residues 375 to 385 (ETEKEADKKPE) the composition is skewed to basic and acidic residues. Residues 389–401 (NHSNSESKSSITE) are compositionally biased toward polar residues. A compositionally biased stretch (low complexity) spans 411-421 (FSASSARRFSS). Phosphothreonine is present on Thr-445. The segment covering 466–478 (SSIYRSSSSPRIS) has biased composition (low complexity). The span at 482–491 (DNKDKERENK) shows a compositional bias: basic and acidic residues. The segment covering 623-632 (VRDEEAESLR) has biased composition (basic and acidic residues). Over residues 633–643 (KARSRQARQTR) the composition is skewed to basic residues. Thr-646 bears the Phosphothreonine mark. A compositionally biased stretch (basic and acidic residues) spans 656–680 (EAERTFSRSRAERQAQEQPREKPTD). The span at 731-742 (TTPASPSTSRPS) shows a compositional bias: low complexity. Residues 743 to 755 (LYTSSHLLWTNRF) show a composition bias toward polar residues. Basic residues predominate over residues 797-807 (ERRRPKERRRG). Position 808 is a phosphothreonine (Thr-808). The span at 824-836 (EEVKETWHERLSR) shows a compositional bias: basic and acidic residues. At Ser-839 the chain carries Phosphoserine. A compositionally biased stretch (polar residues) spans 840–849 (GGSNPTTSDS). Composition is skewed to basic and acidic residues over residues 850-864 (YGDR…EARE), 918-927 (AQQKQEKTSD), and 933-948 (EMEK…KMSE). A Phosphoserine modification is found at Ser-947.

As to quaternary structure, PP1 comprises a catalytic subunit, PPP1CA, PPP1CB or PPP1CC, and one or several targeting or regulatory subunits. PPP1R12B mediates binding to myosin. Isoform 3 and isoform 4 bind PPP1R12A, but not isoform 1 of PPP1R12B itself. Binds IL16. As to expression, detected in skeletal muscle, fetal and adult heart, brain, placenta, kidney, spleen, thymus, pancreas and lung. Isoform 3 and isoform 4 are heart specific.

It is found in the cytoplasm. The protein resides in the cytoskeleton. The protein localises to the stress fiber. Regulates myosin phosphatase activity. Augments Ca(2+) sensitivity of the contractile apparatus. This chain is Protein phosphatase 1 regulatory subunit 12B (PPP1R12B), found in Homo sapiens (Human).